The chain runs to 240 residues: Tetraspanin-1 (240 aa).

The Cytoplasmic portion of the chain corresponds to 1–9 (MQCFSFIKT). Residues 10–30 (IMILFNLLIFLCGAALLAVGI) traverse the membrane as a helical segment. Residues 31 to 52 (WVSIDGASFLKIFGPLSSSAMQ) lie on the Extracellular side of the membrane. The helical transmembrane segment at 53 to 73 (FVNVGYFLIAAGAVVFALGFL) threads the bilayer. Residues 74 to 88 (GCYGAQTESKCALMT) are Cytoplasmic-facing. Residues 89-109 (FFFILLLIFIAEVAAAVVALV) form a helical membrane-spanning segment. Over 110–210 (YTTMAEHFLT…QQLLYDIRTN (101 aa)) the chain is Extracellular. The N-linked (GlcNAc...) asparagine glycan is linked to Asn-154. A helical transmembrane segment spans residues 211 to 231 (AVTVGGVAAGIGGLELAAMIV). Residues 232 to 240 (SMYLYCNLQ) lie on the Cytoplasmic side of the membrane.

Belongs to the tetraspanin (TM4SF) family. As to quaternary structure, interacts with SLC19A2. Interacts with NTRK1/TRKA.

It is found in the lysosome membrane. Functionally, structural component of specialized membrane microdomains known as tetraspanin-enriched microdomains (TERMs), which act as platforms for receptor clustering and signaling. Participates thereby in diverse biological functions such as cell signal transduction, adhesion, migration and protein trafficking. Regulates neuronal differentiation in response to NGF by facilitating NGF-mediated activation of NTRK1/TRKA receptor tyrosine kinase and subsequent downstream signaling pathways. Plays a role in the inhibition of TNFalpha-induced apoptosis. Mechanistically, inhibits the NF-kappa-B signaling pathway by blocking phosphorylation of CHUK. Also promotes the stability of the thiamine transporter 1/SLC19A2 in intestinal epithelial cells leading to an increase of thiamine uptake process. The protein is Tetraspanin-1 (TSPAN1) of Macaca fascicularis (Crab-eating macaque).